A 199-amino-acid chain; its full sequence is ATP-dependent Clp protease proteolytic subunit (199 aa).

The active-site Nucleophile is serine 97. Residue histidine 122 is part of the active site.

The protein belongs to the peptidase S14 family. Fourteen ClpP subunits assemble into 2 heptameric rings which stack back to back to give a disk-like structure with a central cavity, resembling the structure of eukaryotic proteasomes.

The protein resides in the cytoplasm. The catalysed reaction is Hydrolysis of proteins to small peptides in the presence of ATP and magnesium. alpha-casein is the usual test substrate. In the absence of ATP, only oligopeptides shorter than five residues are hydrolyzed (such as succinyl-Leu-Tyr-|-NHMec, and Leu-Tyr-Leu-|-Tyr-Trp, in which cleavage of the -Tyr-|-Leu- and -Tyr-|-Trp bonds also occurs).. Functionally, cleaves peptides in various proteins in a process that requires ATP hydrolysis. Has a chymotrypsin-like activity. Plays a major role in the degradation of misfolded proteins. This is ATP-dependent Clp protease proteolytic subunit from Citrifermentans bemidjiense (strain ATCC BAA-1014 / DSM 16622 / JCM 12645 / Bem) (Geobacter bemidjiensis).